The sequence spans 129 residues: MTATGIAEVIQRYYPDWDPPPDHYEWNKCLCPFHGDETPSAAVSYDLQGFNCLACGVRGDVISIIRHEEEVSFAEAVRIAEGLSVGGNIPVQRKPARKPSRRVFGESRSSGSSGSTVRPGIRGRSTPWS.

The disordered stretch occupies residues 87 to 129 (GNIPVQRKPARKPSRRVFGESRSSGSSGSTVRPGIRGRSTPWS). The segment covering 106–115 (ESRSSGSSGS) has biased composition (low complexity).

The chain is Gene 58 protein (58) from Mycobacterium (Mycobacteriophage D29).